The chain runs to 141 residues: uncharacterized protein (141 aa).

Residues 1–61 form a disordered region; that stretch reads IRLLHSLTPP…PPPPPPPRRA (61 aa). Residues 8-58 show a composition bias toward pro residues; it reads TPPPPPPPPPPPPPPPPPPPPPPPPPPPPPPPPPPPPPPPPPPPPPPPPPP. Residues 98 to 116 constitute a DNA-binding region (H-T-H motif); sequence KRLLVAYPVRHFLSAACQF.

This is an uncharacterized protein from Owenia fusiformis (Polychaete worm).